The following is an 855-amino-acid chain: Beclin-1-like protein B (855 aa).

4 disordered regions span residues Phe-92 to Ser-212, Leu-236 to Asn-271, Ala-294 to Arg-380, and Val-407 to Pro-475. Low complexity-rich tracts occupy residues Thr-99–Leu-123 and Gln-131–Thr-143. The segment covering Phe-144 to Thr-156 has biased composition (polar residues). The segment covering His-177–Ser-200 has biased composition (low complexity). Over residues Ala-294–Ser-348 the composition is skewed to low complexity. Composition is skewed to polar residues over residues Leu-368 to Gln-377 and Ser-413 to Pro-445. The span at Leu-446–Gln-474 shows a compositional bias: low complexity. Positions Glu-538–Glu-595 form a coiled coil. A disordered region spans residues Leu-826–Asn-855.

The protein belongs to the beclin family.

Its subcellular location is the endosome membrane. Functionally, involved in autophagy. May be required to recruit the atg8-phosphatidylinositol conjugate and the atg12-atg5 conjugate to the pre-autophagosomal structure. The polypeptide is Beclin-1-like protein B (atg6B) (Dictyostelium discoideum (Social amoeba)).